The chain runs to 122 residues: UPF0102 protein R00337 (122 aa).

It belongs to the UPF0102 family.

The polypeptide is UPF0102 protein R00337 (Rhizobium meliloti (strain 1021) (Ensifer meliloti)).